A 478-amino-acid polypeptide reads, in one-letter code: Zinc finger protein 410 (478 aa).

2 disordered regions span residues 84–113 and 187–214; these read PDGE…LQDL and NAKT…PLPQ. Positions 103-113 are enriched in polar residues; that stretch reads TPESPSLLQDL. 5 C2H2-type zinc fingers span residues 219 to 243, 249 to 273, 279 to 303, 309 to 333, and 339 to 362; these read LKCT…LKTH, FICP…MRTH, FMCH…RRIH, FLCE…LVVH, and HQCQ…RKHH. Zn(2+) is bound by residues C221, C226, H239, H243, C251, C256, H269, H273, C281, C286, H299, H303, C311, C316, H329, H333, C341, C344, H357, and H361.

As to quaternary structure, interacts with CDKN2A/p14ARF. O-glycosylated. O-GlcNAcylation may occur in response to increasing glucose levels and affect transcription factor activity. In terms of processing, sumoylated. Sumoylation increases its half-life, possibly by blocking ubiquitin-mediated degradation.

The protein resides in the nucleus. It localises to the chromosome. Transcription factor that binds to the sequence motif 5'-CATCCCATAATA-3', and is specifically required to silence expression of fetal hemoglobin in adult erythroid cells. Prevents expression of fetal hemoglobin genes HBG1 and HBG2 through CHD4: acts as a direct transcriptional activator of CHD4, a central component of the NuRD complex that represses transcription of fetal hemoglobin genes HBG1 and HBG2 in erythroid cells. May also activate transcription of matrix-remodeling genes such as MMP1 during fibroblast senescence. May activate transcription of the gap junction gene GJC1, perhaps in response to increasing glucose. However, recent studies suggest that ZNF410 is dedicated to regulate expression of a single gene: CHD4. This chain is Zinc finger protein 410, found in Mus musculus (Mouse).